A 203-amino-acid chain; its full sequence is Hypoxanthine-guanine phosphoribosyltransferase (203 aa).

2 residues coordinate diphosphate: Lys-66 and Gly-67. The Mg(2+) site is built by Glu-122 and Asp-123. The active-site Proton acceptor is the Asp-126. GMP-binding positions include Lys-154, Phe-175–Val-176, and Asp-182. Arg-188 provides a ligand contact to diphosphate.

It belongs to the purine/pyrimidine phosphoribosyltransferase family. Requires Mg(2+) as cofactor.

Its subcellular location is the cytoplasm. It catalyses the reaction IMP + diphosphate = hypoxanthine + 5-phospho-alpha-D-ribose 1-diphosphate. The catalysed reaction is GMP + diphosphate = guanine + 5-phospho-alpha-D-ribose 1-diphosphate. The protein operates within purine metabolism; IMP biosynthesis via salvage pathway; IMP from hypoxanthine: step 1/1. It functions in the pathway purine metabolism; GMP biosynthesis via salvage pathway; GMP from guanine: step 1/1. Purine salvage pathway enzyme that catalyzes the transfer of the ribosyl-5-phosphate group from 5-phospho-alpha-D-ribose 1-diphosphate (PRPP) to the N9 position of the 6-oxopurines hypoxanthine and guanine to form the corresponding ribonucleotides IMP (inosine 5'-monophosphate) and GMP (guanosine 5'-monophosphate), with the release of PPi. This chain is Hypoxanthine-guanine phosphoribosyltransferase (hpt), found in Mycobacterium avium.